A 715-amino-acid chain; its full sequence is Myosin light chain kinase 3 (715 aa).

A disordered region spans residues 67–114; sequence VTLPNDPSSQHSPEAHTGASEPLKPVSAGESSKALQKAKEISVKSSEP. A Protein kinase domain is found at 404–659; it reads VNPVEVLGGG…ASGCMKHSWL (256 aa). Residues 410–418 and Lys-433 each bind ATP; that span reads LGGGRFGQV. Asp-525 serves as the catalytic Proton acceptor.

It belongs to the protein kinase superfamily. CAMK Ser/Thr protein kinase family. Requires Mg(2+) as cofactor. Phosphorylated on serine residues.

Its subcellular location is the cytoplasm. It catalyses the reaction L-seryl-[myosin light chain] + ATP = O-phospho-L-seryl-[myosin light chain] + ADP + H(+). The catalysed reaction is L-threonyl-[myosin light chain] + ATP = O-phospho-L-threonyl-[myosin light chain] + ADP + H(+). Kinase that phosphorylates MYL2 in vitro. Increases cardiomyocyte contractility. Required for sarcomere formation in the developing heart. In Danio rerio (Zebrafish), this protein is Myosin light chain kinase 3 (mylk3).